A 224-amino-acid polypeptide reads, in one-letter code: Transmembrane protein C16orf54 (224 aa).

T4 carries O-linked (GalNAc...) threonine glycosylation. Residues I32–L52 traverse the membrane as a helical segment. 2 disordered regions span residues T104–G138 and W152–P203. Phosphothreonine is present on residues T112 and T116. Residue S194 is modified to Phosphoserine.

Post-translationally, O-glycosylated with core 1 or possibly core 8 glycans.

It localises to the membrane. In Homo sapiens (Human), this protein is Transmembrane protein C16orf54 (C16orf54).